A 161-amino-acid chain; its full sequence is Nucleotide-binding protein Rfer_2692 (161 aa).

It belongs to the YajQ family.

Functionally, nucleotide-binding protein. The sequence is that of Nucleotide-binding protein Rfer_2692 from Albidiferax ferrireducens (strain ATCC BAA-621 / DSM 15236 / T118) (Rhodoferax ferrireducens).